The sequence spans 1160 residues: ATP-dependent helicase/deoxyribonuclease subunit B (1160 aa).

The protein belongs to the helicase family. AddB/RexB type 2 subfamily. In terms of assembly, heterodimer of AddA and RexB. The cofactor is Mg(2+).

Its function is as follows. The heterodimer acts as both an ATP-dependent DNA helicase and an ATP-dependent, dual-direction single-stranded exonuclease. Recognizes the chi site generating a DNA molecule suitable for the initiation of homologous recombination. This subunit has 5' -&gt; 3' nuclease activity but not helicase activity. This Lactobacillus helveticus (strain DPC 4571) protein is ATP-dependent helicase/deoxyribonuclease subunit B.